The sequence spans 1649 residues: MDDDSLDELVARSPGPDGHPQVGPADPAGDFEESSVGSSGDSGDDSDSEHGDGTDGEDEGASEEEDLEDRSGSEDSEDDGETLLEVAGTQGKLEAAGSFNSDDDAESCPICLNAFRDQAVGTPENCAHYFCLDCIVEWSKNANSCPVDRTLFKCICIRAQFGGKILRKIPVENTKASEEEEDPTFCEVCGRSDREDRLLLCDGCDAGYHMECLDPPLQEVPVDEWFCPECAAPGVVLAADAGPVSEEEVSLLLADVVPTTSRLRPRAGRTRAIARTRQSERVRATVNRNRISTARRVQHTPGRLGSSLLDEAIEAVATGLSTAVYQRPLTPRTPARRKRKTRRRKKVPGRKKTPSGPSAKSKSSATRSKKRQHRVKKRRGKKVKSEATTRSRIARTLGLRRPVHSSCIPSVLKPVEPSLGLLRADIGAASLSLFGDPYELDPFDSSEELSANPLSPLSAKRRALSRSALQSHQPVARPVSVGLSRRRLPAAVPEPDLEEEPVPDLLGSILSGQSLLMLGSSDVIIHRDGSLSAKRAAPVSFQRNSGSLSRGEEGFKGCLQPRALPSGSPAQGPSGNRPQSTGLSCQGRSRTPARTAGAPVRLDLPAAPGAVQARNLSNGSVPGFRQSHSPWFNGTNKHTLPLASAASKISSRDSKPPCRSVVPGPPLKPAPRRTDISELPRIPKIRRDDGGGRRDAAPAHGQSIEIPSACISRLTGREGTGQPGRGTRAESEASSRVPREPGVHTGSSRPPAPSSHGSLAPLGPSRGKGVGSTFESFRINIPGNMAHSSQLSSPGFCNTFRPVDDKEQRKENPSPLFSIKKTKQLRSEVYDPSDPTGSDSSAPGSSPERSGPGLLPSEITRTISINSPKAQTVQAVRCVTSYTVESIFGTEPEPPLGPSSAMSKLRGAVAAEGASDTEREEPTESQGLAARLRRPSPPEPWDEEDGASCSTFFGSEERTVTCVTVVEPEAPPSPDVLQAATHRVVELRPPSRSRSTSSSRSRKKAKRKRVSREHGRTRSGTRSESRDRSSRSASPSVGEERPRRQRSKAKSRRSSSDRSSSRERAKRKKAKDKSREHRRGPWGHSRRTSRSRSGSPGSSSYEHYESRKKKKRRSASRPRGRECSPTSSLERLCRHKHQRERSHERPDRKESVAWPRDRRKRRSRSPSSEHRAREHRRPRSREKWPQTRSHSPERKGAVREASPAPLAQGEPGREDLPTRLPALGEAHVSPEVATADKAPLQAPPVLEVAAECEPDDLDLDYGDSVEAGHVFDDFSSDAVFIQLDDMSSPPSPESTDSSPERDFPLKPALPPASLAVAAIQREVSLMHDEDPSQPPPLPEGTQEPHLLRPDAAEKAEAPSSPDVAPAGKEDSPSASGRVQEAARPEEVVSQTPLLRSRALVKRVTWNLQESESSAPAEDRAPRAPLHRPQKPREGAWDMEDVAPTGVRQVFSELPFPSHVLPEPGFPDTDPSQVYSPGLPPAPAQPSSIPPCALVSQPTVQFILQGSLPLVGCGAAQTLAPVPAALTPASEPASQATAASNSEEKTPAPRLAAEKTKKEEYMKKLHMQERAVEEVKLAIKPFYQKREVTKEEYKDILRKAVQKICHSKSGEINPVKVANLVKAYVDKYRHMRRHKKPEAGEEPPTQGAEG.

The interval 1–79 (MDDDSLDELV…RSGSEDSEDD (79 aa)) is disordered. At Ser-5 the chain carries Phosphoserine. Residues 54–79 (TDGEDEGASEEEDLEDRSGSEDSEDD) are compositionally biased toward acidic residues. The RING-type; degenerate zinc finger occupies 108–149 (CPICLNAFRDQAVGTPENCAHYFCLDCIVEWSKNANSCPVDR). The PHD-type zinc finger occupies 183 to 233 (PTFCEVCGRSDREDRLLLCDGCDAGYHMECLDPPLQEVPVDEWFCPECAAP). The interval 324–398 (VYQRPLTPRT…TRSRIARTLG (75 aa)) is disordered. Position 330 is a phosphothreonine (Thr-330). The span at 334-353 (PARRKRKTRRRKKVPGRKKT) shows a compositional bias: basic residues. Residues 354 to 366 (PSGPSAKSKSSAT) are compositionally biased toward low complexity. A compositionally biased stretch (basic residues) spans 367–382 (RSKKRQHRVKKRRGKK). A phosphoserine mark is found at Ser-445 and Ser-455. Disordered stretches follow at residues 534-600 (KRAA…GAPV), 644-871 (SAAS…PKAQ), 888-1240 (FGTE…KAPL), and 1281-1395 (IQLD…PLLR). The segment covering 568 to 589 (SPAQGPSGNRPQSTGLSCQGRS) has biased composition (polar residues). Composition is skewed to basic and acidic residues over residues 685–697 (IRRD…RDAA) and 727–742 (TRAE…REPG). Positions 786–796 (AHSSQLSSPGF) are enriched in polar residues. Basic and acidic residues predominate over residues 802 to 812 (PVDDKEQRKEN). Phosphoserine occurs at positions 814, 845, 846, 864, 867, and 915. Composition is skewed to polar residues over residues 835–848 (PTGS…SSPE) and 859–871 (ITRT…PKAQ). A Phosphothreonine modification is found at Thr-917. Phosphoserine occurs at positions 936, 973, and 991. Residues 988 to 999 (RPPSRSRSTSSS) are compositionally biased toward low complexity. The span at 1000-1011 (RSRKKAKRKRVS) shows a compositional bias: basic residues. The span at 1012–1030 (REHGRTRSGTRSESRDRSS) shows a compositional bias: basic and acidic residues. Positions 1043–1053 (RRQRSKAKSRR) are enriched in basic residues. The segment covering 1054 to 1063 (SSSDRSSSRE) has biased composition (basic and acidic residues). Positions 1064–1090 (RAKRKKAKDKSREHRRGPWGHSRRTSR) are enriched in basic residues. The segment covering 1091-1101 (SRSGSPGSSSY) has biased composition (low complexity). Residues 1106 to 1118 (SRKKKKRRSASRP) are compositionally biased toward basic residues. Ser-1124 and Ser-1128 each carry phosphoserine. 2 stretches are compositionally biased toward basic and acidic residues: residues 1141-1151 (RSHERPDRKES) and 1181-1198 (REKW…KGAV). Phosphoserine occurs at positions 1202 and 1229. The segment covering 1284-1297 (DDMSSPPSPESTDS) has biased composition (low complexity). The segment covering 1345 to 1356 (HLLRPDAAEKAE) has biased composition (basic and acidic residues). 3 positions are modified to phosphoserine: Ser-1359, Ser-1360, and Ser-1371. A Phosphothreonine modification is found at Thr-1404. Disordered regions lie at residues 1407-1439 (LQES…WDME), 1455-1486 (FPSH…AQPS), 1526-1556 (TPAS…EKTK), and 1630-1649 (MRRH…GAEG). Over residues 1531–1540 (PASQATAASN) the composition is skewed to polar residues. A compositionally biased stretch (basic and acidic residues) spans 1541–1556 (SEEKTPAPRLAAEKTK). Residues 1549-1579 (RLAAEKTKKEEYMKKLHMQERAVEEVKLAIK) are a coiled coil.

Interacts with POLR2A (via the C-terminal domain).

The chain is PHD and RING finger domain-containing protein 1 (PHRF1) from Homo sapiens (Human).